We begin with the raw amino-acid sequence, 946 residues long: MTDPEVFCFITKILCAHGGRMTLEELLGEISLPEAQLYELLKAAGPDRFVLLETGDQAGITRSVVATTRARVCRRKYCQRPCDSLHLCKLNLLGRCHYAQSQRNLCKYSHDVLSEQNFQVLKNHELSGLNQEELAVLLVQSDPFFMPEICKSYKGEGRKQICGQPQPCERLHICEHFTRGNCSYLNCLRSHNLMDRKVLAIMREHGLSSDVVQNIQDICNNKHTRRNPPSMRAPHPHRRGGAHRDRSKSRDRFHHNSLEVLSTVSPLGSGPPSPDVTGCKDPLEDVSADVTQKFKYLGTQDRAQLSSVSSKAAGVRGPSQMRASQEFLEDGDPDGLFSRNRSDSSTSRTSAAGFPLVAAQRNEAGAMKMGMPSGHHVEVKGKNEDIDRVPFLNSYIDGVTMEEATVSGILGKRATDNGLEEMILSSNHQKSVAKTQDPQTAGRITDSGQDTAFLHSKYEENPAWPGTSTHNGPNGFSQIMDETPNVSKSSPTGFGIKSAVTGGKEAVYSGVQSLRSHVLAMPGETTTPVQGSNRLPPSPLSSSTSHRVAASGSPGKSSTHASVSPASEPSRMMMMMSDPAEYSLCYIVNPVSPRMDDHGLKEICLDHLYRGCQQVNCNKNHFHLPYRWQLFILPTWMDFQDMEYIERAYCDPQIEIIVIEKHRINFKKMTCDSYPIRRLSTPSFVEKTLNSVFTTKWLWYWRNELNEYTQYGHESPSHTSSEINSAYLESFFHSCPRGVLQFHAGSQNYELSFQGMIQTNIASKTQRHVVRRPVFVSSKDVEQKRRGPDHQPVMPQADALTLFSSPQRNASTVSSNEYEFIELNNQDEEYAKISEQFKASMKQFKIVTIKRIWNQKLWDTFERKKQKMKNKTEMFLFHAVGRIHMDYICKNNFEWILHGNREIRYGKGLCWRRENCDSSHAHGFLEMPLASLGRTASLDSSGLQRK.

The segment at M1–H254 is N-terminal domain. A Nuclear localization signal motif is present at residues R69 to K76. 4 consecutive C3H1-type zinc fingers follow at residues C73–H86, L87–L113, C150–H172, and I173–M194. Disordered stretches follow at residues N221–L283 and R302–F354. The interval T224 to H254 is binding to EXOSC5. Basic and acidic residues predominate over residues A242–S257. Position 257 is a phosphoserine (S257). At S262 the chain carries Phosphoserine; by GSK3-beta. A phosphoserine mark is found at S265, S269, and S273. At T277 the chain carries Phosphothreonine. Residues L283–V290 carry the Nuclear export signal motif. A phosphoserine mark is found at S324 and S350. The short motif at K412 to R413 is the Nuclear localization signal element. Phosphoserine is present on S425. A disordered region spans residues N461–P491. A compositionally biased stretch (polar residues) spans G466 to S477. Y508 is subject to Phosphotyrosine. A disordered region spans residues G523 to S570. Over residues E524–N533 the composition is skewed to polar residues. A Phosphoserine modification is found at S553. Residues P554 to S567 are compositionally biased toward polar residues. A phosphoserine mark is found at S583 and S680. The 88-residue stretch at F684–R771 folds into the WWE domain. The region spanning S805–K946 is the PARP catalytic domain.

Belongs to the ARTD/PARP family. In terms of assembly, homodimer or homooligomer. Homooligomerization is essential for its antiviral activity. Interacts with EXOSC5. Interacts (via N-terminal domain) with DDX17 in an RNA-independent manner. Interacts with EXOSC3, EXOSC7, DCP2 and DCP1A. Interacts with PARN in an RNA-independent manner. Interacts with XRN1 in an RNA-dependent manner. Interacts (via N-terminal domain) with DHX30 (via N-terminus) in an RNA-independent manner. Isoform 2 interacts (via zinc-fingers) with RIGI in an RNA-dependent manner. Phosphorylation at Ser-273 is essential for sequential phosphorylation of Ser-269, Ser-265, Ser-262 and Ser-257 by GSK3-beta. Phosphorylation by GSK3-beta enhances its antiviral activity.

The protein resides in the cytoplasm. It is found in the nucleus. In terms of biological role, antiviral protein which inhibits the replication of viruses by recruiting the cellular RNA degradation machineries to degrade the viral mRNAs. Binds to a ZAP-responsive element (ZRE) present in the target viral mRNA, recruits cellular poly(A)-specific ribonuclease PARN to remove the poly(A) tail, and the 3'-5' exoribonuclease complex exosome to degrade the RNA body from the 3'-end. It also recruits the decapping complex DCP1-DCP2 through RNA helicase p72 (DDX17) to remove the cap structure of the viral mRNA to initiate its degradation from the 5'-end. Its target viruses belong to families which include retroviridae: human immunodeficiency virus type 1 (HIV-1) and moloney and murine leukemia virus (MoMLV), filoviridae: ebola virus (EBOV) and marburg virus (MARV), togaviridae: sindbis virus (SINV) and Ross river virus (RRV). Specifically targets the multiply spliced but not unspliced or singly spliced HIV-1 mRNAs for degradation. Isoform 1 is a more potent viral inhibitor than isoform 2. Isoform 2 acts as a positive regulator of RIG-I signaling resulting in activation of the downstream effector IRF3 leading to the expression of type I IFNs and IFN stimulated genes (ISGs). The chain is Zinc finger CCCH-type antiviral protein 1 (Zc3hav1) from Mus musculus (Mouse).